The primary structure comprises 347 residues: Protein RecA (347 aa).

65 to 72 (GPESSGKT) contacts ATP.

The protein belongs to the RecA family.

Its subcellular location is the cytoplasm. In terms of biological role, can catalyze the hydrolysis of ATP in the presence of single-stranded DNA, the ATP-dependent uptake of single-stranded DNA by duplex DNA, and the ATP-dependent hybridization of homologous single-stranded DNAs. It interacts with LexA causing its activation and leading to its autocatalytic cleavage. The polypeptide is Protein RecA (Stutzerimonas stutzeri (Pseudomonas stutzeri)).